We begin with the raw amino-acid sequence, 285 residues long: MTTTETGTRDPDALVRRAGKRADTRQDQHFLVDDRVLDRIPEYATDADIDLSHVLEIGAGPGALTDRLLATAERVTAVERDPDFAAHLREEFTEEVAADRLTIVEGDALEVDLPDFTASISNLPYGASSEIAFRLLPEQRPLLLMFQQEFAERMAADPATDDYGRLSVTAGHYADVEVVETVPPEAFDPQPRVTSALVRTMPRTPDYTVPSDDFFMDFLKAVFTQRRKTMRNAVRNTAHISGLGDPDAVVEAADEGLMSARAGKLTPADFATLATLAYEVGQPEA.

Residues His-29, Leu-31, Gly-58, Glu-79, Asp-107, and Asn-122 each coordinate S-adenosyl-L-methionine.

It belongs to the class I-like SAM-binding methyltransferase superfamily. rRNA adenine N(6)-methyltransferase family. RsmA subfamily.

Its subcellular location is the cytoplasm. Functionally, specifically dimethylates two adjacent adenosines in the loop of a conserved hairpin near the 3'-end of 16S rRNA in the 30S particle. May play a critical role in biogenesis of 30S subunits. The polypeptide is Probable ribosomal RNA small subunit methyltransferase A (Haloarcula marismortui (strain ATCC 43049 / DSM 3752 / JCM 8966 / VKM B-1809) (Halobacterium marismortui)).